An 8922-amino-acid chain; its full sequence is Protein clarinet (8922 aa).

Residues 11–35 (SKGPPLEEVREESEEDAQVPEQVVS) are disordered. A compositionally biased stretch (acidic residues) spans 19–28 (VREESEEDAQ). A coiled-coil region spans residues 385-405 (KDETKLILKSVEDKLETTEIE). Disordered regions lie at residues 527-579 (QEAA…EPEL), 622-673 (IVIS…EPEL), 687-860 (LAEK…KEPE), 880-955 (SFEQ…EPEL), 971-1049 (EQSS…EPEL), 1062-1139 (SSAE…MESR), 1151-1331 (IARI…EPEL), 1347-1420 (EQSS…VMES), 1444-1520 (SFEQ…PELT), 1538-1619 (SFEQ…EEID), 1632-1710 (SFEQ…LTQE), 1726-1801 (SFEQ…VPEL), 1820-1898 (SFEQ…LTQE), 1939-1992 (VISE…LTQE), 2032-2084 (IVIS…SELT), 2126-2175 (IVIS…SKEP), 2194-2213 (QSSFEQASTITDRPPLPVRL), 2220-2246 (IVISEQHEGDRSSATPGADYERSYDQD), 2329-2403 (SFEQ…KKPE), 2423-2497 (SFEQ…KPEL), 2516-2594 (SFEQ…LTQE), 2610-2684 (SFEQ…KEPE), 2704-2845 (SFEQ…ERPF), 2892-2963 (SFEQ…MESK), 2983-3155 (EQSS…EPEL), 3171-3249 (EQSS…EPEL), 3268-3337 (SFEQ…PVML), 3619-3639 (SITPSEGDDGGSSETGHPTTD), 3995-4079 (AEPV…QEEI), 4117-4169 (IVIS…PELT), 4181-4271 (SLAE…STTI), 4557-4624 (QASA…TQEE), 4636-4656 (EQSSFEQASTIPDRPPLPVRL), 4666-4685 (SEQHEGDISSATSGADYERS), 4730-4801 (EQSS…GVTQ), 4855-4899 (PANP…PLQD), 5004-5036 (PEDFSEATSGADTESISETTANKKDSNDSNGLT), 5360-5379 (LAMFTNPSPSASPSLLRKES), 5390-5413 (RRSSGADSRASNDSSASRLPDTAL), 5484-5511 (KKQISSRTESTNSRVSSEGIDEEVENEV), 5540-5572 (PPIAISHPTPPHSAKTDTGSRHSSGSSAHSQFG), 6194-6303 (AEPV…ESES), 6354-6437 (DVES…GSRM), 6487-6510 (SSKSSTSLGTSAPTKSIPSPQIGI), 6577-6609 (ARFPPPSSQIPTRSPSVMSSSIMSELPPGLDDL), 6668-6691 (NAETDSSSSVITSRQPSRSPSVAR), 6728-6768 (AEFE…VPPG), 6998-7018 (TERKQREESPTRESGYATSTS), 7045-7098 (ARSR…DDFD), 7137-7175 (FDGDESELPHQDFVFNEPTTKKTSDFDFPKETDEVFEKP), 7202-7263 (EAPS…YPDR), 7313-7350 (KTTTSQTPSTSTKPTVTAPKRSDPIPIAPSQRSKEIEE), 7598-7623 (DSVRDDNERNENETTSPRGLKRSPGM), 7760-7797 (TRRHQHQQQHQAPVYITSSASRPPSAAGSNIFQESRPT), and 7842-7881 (HIRQPVSVRSPRAQTGTTQTTAASGSASNSIRPSIGSSSV). The span at 531-552 (SDNHEKERSSATSKADYERSFD) shows a compositional bias: basic and acidic residues. A compositionally biased stretch (basic and acidic residues) spans 760–776 (MESKEPELTQEEIDHIA). A compositionally biased stretch (low complexity) spans 1062-1076 (SSAEQSSFEQASTVP). Positions 1230-1244 (MESKEPELTQEEIDH) are enriched in basic and acidic residues. Polar residues predominate over residues 1251–1261 (IAEQSSFEQAS). Basic and acidic residues-rich tracts occupy residues 1606 to 1619 (MESKEPELTQEEID) and 1700 to 1710 (MESKEPELTQE). 2 stretches are compositionally biased toward basic and acidic residues: residues 1888–1898 (MESKEPELTQE) and 1982–1992 (MESKESELTQE). A compositionally biased stretch (polar residues) spans 2194 to 2204 (QSSFEQASTIT). Over residues 2584-2594 (MESKEPELTQE) the composition is skewed to basic and acidic residues. Positions 2772-2788 (MESKEPELTQEEIDHIA) are enriched in basic and acidic residues. The segment covering 2793–2803 (LAEQSSFEQAS) has biased composition (polar residues). The span at 3076–3085 (APSSSFEQAS) shows a compositional bias: polar residues. Over residues 4035–4044 (GTSFPDNAET) the composition is skewed to polar residues. Residues 4065 to 4079 (PVMKSKEPELTQEEI) are compositionally biased toward basic and acidic residues. Composition is skewed to polar residues over residues 4182–4195 (LAEQSSFEQTSTIP), 4223–4234 (SATSGADYQQSF), and 4255–4271 (MESTQPELTQDHSSTTI). Positions 4571–4580 (IVEKREDDKS) are enriched in basic and acidic residues. Over residues 4581–4594 (NITSGADYQQSFDQ) the composition is skewed to polar residues. Positions 4613 to 4624 (MESKEPELTQEE) are enriched in basic and acidic residues. The span at 4636-4645 (EQSSFEQAST) shows a compositional bias: polar residues. Positions 4730 to 4739 (EQSSFEQAST) are enriched in polar residues. The span at 4871 to 4890 (EGSSSATSGADIPSSFDISS) shows a compositional bias: low complexity. Residues 5009–5023 (EATSGADTESISETT) show a composition bias toward polar residues. A compositionally biased stretch (low complexity) spans 5390 to 5407 (RRSSGADSRASNDSSASR). The span at 5486-5499 (QISSRTESTNSRVS) shows a compositional bias: polar residues. Residues 5540–5550 (PPIAISHPTPP) are compositionally biased toward pro residues. Low complexity predominate over residues 5560–5572 (RHSSGSSAHSQFG). Polar residues-rich tracts occupy residues 6225-6245 (ASSGASGSFDNNNAQVLTSGF) and 6270-6284 (KTVSPTPSADSMASR). 2 stretches are compositionally biased toward basic and acidic residues: residues 6285-6303 (KSSEYDIRSISEIRQESES) and 6376-6422 (GEGE…EESL). The span at 6494-6505 (LGTSAPTKSIPS) shows a compositional bias: polar residues. Low complexity predominate over residues 6590–6600 (SPSVMSSSIMS). Residues 6670 to 6687 (ETDSSSSVITSRQPSRSP) show a composition bias toward polar residues. Over residues 6735–6747 (SQVPSRQPSRSPS) the composition is skewed to low complexity. Basic and acidic residues-rich tracts occupy residues 6998–7008 (TERKQREESPT) and 7045–7069 (ARSRRDSRDEVLHRREEDPEVHTPE). Low complexity predominate over residues 7071–7086 (SSTAVVTDVPSVSPVT). Residues 7155 to 7175 (TTKKTSDFDFPKETDEVFEKP) are compositionally biased toward basic and acidic residues. The segment covering 7248–7260 (SDEESCSEDDEEY) has biased composition (acidic residues). The segment covering 7313–7331 (KTTTSQTPSTSTKPTVTAP) has biased composition (low complexity). The span at 7599–7609 (SVRDDNERNEN) shows a compositional bias: basic and acidic residues. Composition is skewed to low complexity over residues 7777 to 7788 (SSASRPPSAAGS) and 7854 to 7880 (AQTGTTQTTAASGSASNSIRPSIGSSS). Residues 7895–7915 (KKELKDVLIQRKQRLEATEIE) are a coiled coil. The tract at residues 8510–8562 (SRRRAQETALTSSNKISTGSRSYARRPIRPSSYRNPEATNSMPDRHVARRTAE) is disordered. Composition is skewed to polar residues over residues 8517-8530 (TALTSSNKISTGSR) and 8541-8551 (SYRNPEATNSM). Positions 8552–8562 (PDRHVARRTAE) are enriched in basic and acidic residues. The PDZ domain occupies 8570 to 8661 (RILLTRSYKH…EIEMVIRTYK (92 aa)). A C2 domain is found at 8714–8835 (CHGHIQVSLG…SAINTGPRWY (122 aa)).

As to expression, expressed in the nervous system.

The protein localises to the synapse. It localises to the cell projection. Its subcellular location is the axon. Required for synapse development in the active zone of presynaptic terminals of specific neurons including serotonergic NSM neurons. The active zone is a protein-dense neuronal region within the presynaptic bouton, from which synaptic vesicles send neurotransmitter signals across the synapse. Plays a role in the recruitment and clustering of synaptic vesicles in the active zone of presynaptic terminals in serotonergic NSM neurons, and coordinates the release of synaptic vesicles at presynaptic terminals to regulate neurotransmission at neuromuscular junctions. Regulates synapse number in inhibitory motor neurons and plays a role in spontaneous postsynaptic synaptic vesicle release in muscle cells. This chain is Protein clarinet, found in Caenorhabditis elegans.